The sequence spans 122 residues: MARILNVEIPNNKRVIISLTYVYGIGRSLSKQILAEANIDENIRVKDLSEEDLTKIRNIASRFTTEGDLRREIQLNIKRLMEIKSYRGIRHRKGLPVRGQVTQKNARTRKGPRKTVAGKKGK.

Residues 94-122 (GLPVRGQVTQKNARTRKGPRKTVAGKKGK) form a disordered region. Basic residues predominate over residues 106-122 (ARTRKGPRKTVAGKKGK).

It belongs to the universal ribosomal protein uS13 family. In terms of assembly, part of the 30S ribosomal subunit. Forms a loose heterodimer with protein S19. Forms two bridges to the 50S subunit in the 70S ribosome.

Functionally, located at the top of the head of the 30S subunit, it contacts several helices of the 16S rRNA. In the 70S ribosome it contacts the 23S rRNA (bridge B1a) and protein L5 of the 50S subunit (bridge B1b), connecting the 2 subunits; these bridges are implicated in subunit movement. Contacts the tRNAs in the A and P-sites. The protein is Small ribosomal subunit protein uS13 of Mycoplasma mobile (strain ATCC 43663 / 163K / NCTC 11711) (Mesomycoplasma mobile).